Consider the following 158-residue polypeptide: Small ribosomal subunit protein uS7 (158 aa).

Belongs to the universal ribosomal protein uS7 family. As to quaternary structure, part of the 30S ribosomal subunit. Contacts proteins S9 and S11.

In terms of biological role, one of the primary rRNA binding proteins, it binds directly to 16S rRNA where it nucleates assembly of the head domain of the 30S subunit. Is located at the subunit interface close to the decoding center, probably blocks exit of the E-site tRNA. This Christiangramia forsetii (strain DSM 17595 / CGMCC 1.15422 / KT0803) (Gramella forsetii) protein is Small ribosomal subunit protein uS7.